The primary structure comprises 340 residues: L-threonine 3-dehydrogenase (340 aa).

Position 38 (Cys-38) interacts with Zn(2+). Catalysis depends on charge relay system residues Thr-40 and His-43. Positions 63, 64, 93, 96, 99, and 107 each coordinate Zn(2+). NAD(+) contacts are provided by residues Ile-175, Asp-195, Arg-200, 261–263 (LGI), and 285–286 (IY).

The protein belongs to the zinc-containing alcohol dehydrogenase family. Homotetramer. It depends on Zn(2+) as a cofactor.

It localises to the cytoplasm. It carries out the reaction L-threonine + NAD(+) = (2S)-2-amino-3-oxobutanoate + NADH + H(+). It participates in amino-acid degradation; L-threonine degradation via oxydo-reductase pathway; glycine from L-threonine: step 1/2. Catalyzes the NAD(+)-dependent oxidation of L-threonine to 2-amino-3-ketobutyrate. This chain is L-threonine 3-dehydrogenase, found in Xanthomonas oryzae pv. oryzae (strain MAFF 311018).